The sequence spans 224 residues: Glycerol-3-phosphate acyltransferase (224 aa).

6 helical membrane passes run 14–34, 70–90, 99–119, 129–149, 162–182, and 185–205; these read INMI…GWLL, YLSI…VLGA, TQWS…YLGF, IGSV…IWGI, LIGV…LPLP, and ISII…LFIF.

It belongs to the PlsY family. In terms of assembly, probably interacts with PlsX.

The protein localises to the cell inner membrane. The enzyme catalyses an acyl phosphate + sn-glycerol 3-phosphate = a 1-acyl-sn-glycero-3-phosphate + phosphate. Its pathway is lipid metabolism; phospholipid metabolism. Its function is as follows. Catalyzes the transfer of an acyl group from acyl-phosphate (acyl-PO(4)) to glycerol-3-phosphate (G3P) to form lysophosphatidic acid (LPA). This enzyme utilizes acyl-phosphate as fatty acyl donor, but not acyl-CoA or acyl-ACP. In Helicobacter hepaticus (strain ATCC 51449 / 3B1), this protein is Glycerol-3-phosphate acyltransferase.